The primary structure comprises 370 residues: MALQDFTPSEPLTLGVELELQLLSTHDFDLAPQAEDLLRETAKHSGAWDIKPEITRSMIEIGSSIQRRHGPLREELRDMRNQLTRAARKLNIAIAGGGTHAYQHWSEQQIFPAERFRYISELYGYLAKQFTVFGQHVHVGCPDGDQALWLLHALSRYVPHFIALSASSPYVQGQDTGFDSARLNSVFAFPLSGRAPFVRSWEEFGGFFDKMTATGVVQSMKDFYWDIRPKPEFGTIELRVCDTPLSVDKAAALACYLQCICRQLREEKPFEPSEDDYLVYTFNRFQACRFGLDGEIVDPKTKQRSRLRDDILRTLTRLDEHALDLEALDATQLLRDSLFEGNDARWLRTQRAAMLPLPAVVEAAARRWGE.

The protein belongs to the glutamate--cysteine ligase type 2 family. YbdK subfamily.

The catalysed reaction is L-cysteine + L-glutamate + ATP = gamma-L-glutamyl-L-cysteine + ADP + phosphate + H(+). ATP-dependent carboxylate-amine ligase which exhibits weak glutamate--cysteine ligase activity. This Methylibium petroleiphilum (strain ATCC BAA-1232 / LMG 22953 / PM1) protein is Putative glutamate--cysteine ligase 2.